A 65-amino-acid chain; its full sequence is MPKIKTRRSAAKRFSVTGSGKFKRRKQNLRHILTKKNAKRRMRLGQSATVDSTNEKAVRRMMPYA.

Basic residues predominate over residues 1-11 (MPKIKTRRSAA). Disordered regions lie at residues 1 to 24 (MPKIKTRRSAAKRFSVTGSGKFKR) and 41 to 65 (RMRLGQSATVDSTNEKAVRRMMPYA).

This sequence belongs to the bacterial ribosomal protein bL35 family.

The sequence is that of Large ribosomal subunit protein bL35 from Nitratidesulfovibrio vulgaris (strain DSM 19637 / Miyazaki F) (Desulfovibrio vulgaris).